The primary structure comprises 367 residues: Uroporphyrinogen decarboxylase (367 aa).

M1 carries the N-acetylmethionine modification. 8 residues coordinate coproporphyrinogen I: R37, A39, R41, R50, D86, Y164, S219, and H339. Coproporphyrinogen III is bound by residues R37, A39, and R41. Coproporphyrinogen III is bound by residues D86, Y164, S219, and H339.

It belongs to the uroporphyrinogen decarboxylase family. As to quaternary structure, homodimer.

The protein localises to the cytoplasm. Its subcellular location is the cytosol. The enzyme catalyses uroporphyrinogen III + 4 H(+) = coproporphyrinogen III + 4 CO2. It carries out the reaction uroporphyrinogen I + 4 H(+) = coproporphyrinogen I + 4 CO2. It participates in porphyrin-containing compound metabolism; protoporphyrin-IX biosynthesis; coproporphyrinogen-III from 5-aminolevulinate: step 4/4. In terms of biological role, catalyzes the sequential decarboxylation of the four acetate side chains of uroporphyrinogen to form coproporphyrinogen and participates in the fifth step in the heme biosynthetic pathway. Isomer I or isomer III of uroporphyrinogen may serve as substrate, but only coproporphyrinogen III can ultimately be converted to heme. In vitro also decarboxylates pentacarboxylate porphyrinogen I. The sequence is that of Uroporphyrinogen decarboxylase from Pongo abelii (Sumatran orangutan).